A 25-amino-acid polypeptide reads, in one-letter code: GILKKFMLHRGTKVYKMRTLSKRSH.

As to expression, expressed by the venom gland.

Its subcellular location is the secreted. In terms of biological role, antimicrobial peptide against both Gram-positive, -negative and yeast. Also induces histamine release by mast cells and shows moderate hemolytic activities against both human and rabbit red cells. The chain is Antimicrobial peptide scolopin-2 from Scolopendra mutilans (Chinese red-headed centipede).